Reading from the N-terminus, the 91-residue chain is MVKKNSFISVITQEEKEENSGSVEFQVFHFTSKIRRLTSHLELHKRDFLSQKGLRIILGKRQRLLTYLSKKNKVRYKKLTDQLNIREPKIS.

This sequence belongs to the universal ribosomal protein uS15 family. As to quaternary structure, part of the 30S ribosomal subunit.

The protein localises to the plastid. The protein resides in the chloroplast. The sequence is that of Small ribosomal subunit protein uS15c (rps15) from Phalaenopsis aphrodite subsp. formosana (Moth orchid).